Consider the following 96-residue polypeptide: Putative membrane protein insertion efficiency factor (96 aa).

Residues 68-96 (DPVPEHFPARHPRPQGSPPTDHPPTDQPS) form a disordered region. A compositionally biased stretch (pro residues) spans 82-96 (QGSPPTDHPPTDQPS).

This sequence belongs to the UPF0161 family.

It localises to the cell membrane. Functionally, could be involved in insertion of integral membrane proteins into the membrane. This chain is Putative membrane protein insertion efficiency factor, found in Deinococcus radiodurans (strain ATCC 13939 / DSM 20539 / JCM 16871 / CCUG 27074 / LMG 4051 / NBRC 15346 / NCIMB 9279 / VKM B-1422 / R1).